The following is a 211-amino-acid chain: Ribosomal RNA small subunit methyltransferase G (211 aa).

Residues Gly76, Leu81, 127 to 128, and Arg142 each bind S-adenosyl-L-methionine; that span reads VE.

The protein belongs to the methyltransferase superfamily. RNA methyltransferase RsmG family.

The protein resides in the cytoplasm. It catalyses the reaction guanosine(527) in 16S rRNA + S-adenosyl-L-methionine = N(7)-methylguanosine(527) in 16S rRNA + S-adenosyl-L-homocysteine. Functionally, specifically methylates the N7 position of guanine in position 527 of 16S rRNA. In Vibrio campbellii (strain ATCC BAA-1116), this protein is Ribosomal RNA small subunit methyltransferase G.